Consider the following 150-residue polypeptide: Large ribosomal subunit protein bL9 (150 aa).

It belongs to the bacterial ribosomal protein bL9 family.

In terms of biological role, binds to the 23S rRNA. The protein is Large ribosomal subunit protein bL9 of Shewanella woodyi (strain ATCC 51908 / MS32).